The chain runs to 757 residues: Xaa-Pro dipeptidyl-peptidase (757 aa).

Catalysis depends on charge relay system residues S348, D468, and H498.

Belongs to the peptidase S15 family. As to quaternary structure, homodimer.

The protein localises to the cytoplasm. It carries out the reaction Hydrolyzes Xaa-Pro-|- bonds to release unblocked, N-terminal dipeptides from substrates including Ala-Pro-|-p-nitroanilide and (sequentially) Tyr-Pro-|-Phe-Pro-|-Gly-Pro-|-Ile.. In terms of biological role, removes N-terminal dipeptides sequentially from polypeptides having unsubstituted N-termini provided that the penultimate residue is proline. The polypeptide is Xaa-Pro dipeptidyl-peptidase (Streptococcus pneumoniae (strain Hungary19A-6)).